Consider the following 209-residue polypeptide: Ribonuclease HII (209 aa).

The RNase H type-2 domain maps to 20–209; sequence GLVAGVDEAG…VARSLPGACR (190 aa). Positions 26, 27, and 118 each coordinate a divalent metal cation.

The protein belongs to the RNase HII family. Mn(2+) serves as cofactor. It depends on Mg(2+) as a cofactor.

The protein resides in the cytoplasm. It catalyses the reaction Endonucleolytic cleavage to 5'-phosphomonoester.. In terms of biological role, endonuclease that specifically degrades the RNA of RNA-DNA hybrids. The sequence is that of Ribonuclease HII from Verminephrobacter eiseniae (strain EF01-2).